We begin with the raw amino-acid sequence, 498 residues long: ADP,ATP carrier protein 1 (498 aa).

Over 1–33 the chain is Cytoplasmic; the sequence is MSTSKSENYLSELRKIIWPIEQHENKKFLPLAF. A helical membrane pass occupies residues 34 to 54; sequence MMFCILLNYSTLRSIKDGFVV. The cysteines at positions 37 and 85 are disulfide-linked. Over 55 to 67 the chain is Extracellular; that stretch reads TDIGTESISFLKT. The chain crosses the membrane as a helical span at residues 68-88; that stretch reads YIVLPSAVIAMVIYVKLCDIL. Over 89–92 the chain is Cytoplasmic; that stretch reads KQEN. Residues 93–113 traverse the membrane as a helical segment; that stretch reads IFYVITSFFLGYFALFAFVLY. Residues 114-147 lie on the Extracellular side of the membrane; it reads PYPDLVHPDHKTIESLSLAYPNFKWFIKIVGKWS. Residues 148 to 168 traverse the membrane as a helical segment; that stretch reads FASFYTIAELWGTMMLSLLFW. Over 169 to 184 the chain is Cytoplasmic; it reads QFANQITKITEAKRFY. A helical membrane pass occupies residues 185–205; sequence SMFGLLANLALPVTSVVIGYF. Over 206–218 the chain is Extracellular; that stretch reads LHEKTQIVSEHLK. The helical transmembrane segment at 219-239 threads the bilayer; sequence FIPLFVIMITSSFLIILTYRW. Residues 240–279 are Cytoplasmic-facing; sequence MNKNVLTDPRLYDPTLVKEKKAKAKLSFIESFKMIFTSKY. A helical transmembrane segment spans residues 280–300; the sequence is VGYIALLIIAYGVSVNLVEGV. At 301-320 the chain is on the extracellular side; it reads WKSKVKELYPTKEAYTIYMG. Residues 321 to 341 traverse the membrane as a helical segment; it reads QFQFYQGWVAIAFMLIGSNIL. Residues 342–348 lie on the Cytoplasmic side of the membrane; the sequence is RKVSWLT. The chain crosses the membrane as a helical span at residues 349 to 369; it reads AAMITPLMMFITGAAFFSFIF. Residues 370–379 lie on the Extracellular side of the membrane; it reads FDSVIAMNLT. A helical membrane pass occupies residues 380-400; it reads GILASSPLTLAVMFGMIQNVL. Residues 401–438 lie on the Cytoplasmic side of the membrane; the sequence is SKGVKYSLFDATKNMAYIPLDKDLRVKGQAAVEVIGGR. 436-442 is an ATP binding site; it reads GGRLGKS. A helical membrane pass occupies residues 439–459; sequence LGKSGGAIIQSTFFILFPAFG. Residues 460–465 are Extracellular-facing; it reads FIEATP. The helical transmembrane segment at 466–486 threads the bilayer; that stretch reads YFASIFFIIVILWIFAVKGLN. Residues 487 to 498 lie on the Cytoplasmic side of the membrane; it reads KEYQVLVNKNEN.

Belongs to the ADP/ATP translocase tlc family.

It is found in the cell membrane. Its function is as follows. Provides the rickettsial cell with host ATP in exchange for rickettsial ADP. This is an obligate exchange system. This energy acquiring activity is an important component of rickettsial parasitism. This Rickettsia typhi (strain ATCC VR-144 / Wilmington) protein is ADP,ATP carrier protein 1 (tlcA).